The chain runs to 359 residues: Tropomodulin-1 (359 aa).

The segment at 36 to 61 is disordered; the sequence is ELDPDNALLPAGLRQKDQTTKAPTGP. The interval 39–138 is tropomyosin-binding; sequence PDNALLPAGL…CDIAAILGMH (100 aa).

It belongs to the tropomodulin family. As to quaternary structure, binds to the N-terminus of tropomyosin and to actin. Interacts with FLII.

It localises to the cytoplasm. Its subcellular location is the cytoskeleton. Its function is as follows. Blocks the elongation and depolymerization of the actin filaments at the pointed end. The Tmod/TM complex contributes to the formation of the short actin protofilament, which in turn defines the geometry of the membrane skeleton. In Rattus norvegicus (Rat), this protein is Tropomodulin-1 (Tmod1).